Here is a 452-residue protein sequence, read N- to C-terminus: Golgi reassembly-stacking protein 2 (452 aa).

A lipid anchor (N-myristoyl glycine) is attached at G2. PDZ GRASP-type domains are found at residues 15-105 (EGYH…FCSF) and 111-199 (NVWH…YGYL). A GRASP region spans residues 15–215 (EGYHVLRVQE…PFEEGKKISL (201 aa)). Dimethylated arginine is present on residues R30 and R47. Residues 194–199 (IGYGYL) are important for membrane binding. S214 carries the phosphoserine modification. Residues T222 and T225 each carry the phosphothreonine modification. Residues 372 to 424 (PESSSAASSGELLSSLPPTSNAPSDPATTTAKADAASSLTVDVTPPTAKAPTT) are compositionally biased toward low complexity. The interval 372–452 (PESSSAASSG…AVDANASESP (81 aa)) is disordered. S409 bears the Phosphoserine mark. Phosphothreonine is present on residues T415 and T433. Phosphoserine occurs at positions 436, 441, 449, and 451.

The protein belongs to the GORASP family. In terms of assembly, homodimer. Homooligomer. ER stress induces phosphorylation-dependent monomerization. Interacts with BLZF1/Golgin 45. Identified in a complex with RAB2 and GORASP2. Interacts with JAM2 and JAM3. Interacts with members of the p24 cargo receptors. Interacts with CNIH1 and the cytoplasmic domain of transmembrane TGFA, prior its transit in the trans-Golgi. Interacts with KCTD5. Interacts with TMED2 and TMED3. Interacts with SEC16A in response to ER stress. Interacts (via PDZ GRASP-type 1 domain) with core-glycosylated CFTR in response to ER stress. Post-translationally, myristoylated. Myristoylation is essential for the Golgi targeting. Palmitoylated. In terms of processing, phosphorylated in mitotic cells. ER stress-induced phosphorylation at Ser-441 induces monomerization and subsequent relocalization from Golgi to ER which is essential for mediating unconventional (ER/Golgi-independent) trafficking of CFTR to the cell membrane.

It localises to the golgi apparatus membrane. Its subcellular location is the endoplasmic reticulum membrane. The protein localises to the golgi apparatus. Functionally, key structural protein of the Golgi apparatus. The membrane cisternae of the Golgi apparatus adhere to each other to form stacks, which are aligned side by side to form the Golgi ribbon. Acting in concert with GORASP1/GRASP65, is required for the formation and maintenance of the Golgi ribbon, and may be dispensable for the formation of stacks. However, other studies suggest that GORASP2 plays a role in the assembly and membrane stacking of the Golgi cisternae, and in the process by which Golgi stacks reform after breakdown during mitosis and meiosis. May regulate the intracellular transport and presentation of a defined set of transmembrane proteins, such as transmembrane TGFA. Required for normal acrosome formation during spermiogenesis and normal male fertility, probably by promoting colocalization of JAM2 and JAM3 at contact sites between germ cells and Sertoli cells. Mediates ER stress-induced unconventional (ER/Golgi-independent) trafficking of core-glycosylated CFTR to cell membrane. This chain is Golgi reassembly-stacking protein 2 (GORASP2), found in Homo sapiens (Human).